A 181-amino-acid chain; its full sequence is Adenine phosphoribosyltransferase (181 aa).

The protein belongs to the purine/pyrimidine phosphoribosyltransferase family. In terms of assembly, homodimer.

It localises to the cytoplasm. The catalysed reaction is AMP + diphosphate = 5-phospho-alpha-D-ribose 1-diphosphate + adenine. The protein operates within purine metabolism; AMP biosynthesis via salvage pathway; AMP from adenine: step 1/1. In terms of biological role, catalyzes a salvage reaction resulting in the formation of AMP, that is energically less costly than de novo synthesis. This Brucella abortus (strain S19) protein is Adenine phosphoribosyltransferase.